The primary structure comprises 370 residues: Flagellar P-ring protein (370 aa).

The first 28 residues, 1–28 (MTFFTRCFRRGALLFLLAVLLLPSPAQA), serve as a signal peptide directing secretion.

The protein belongs to the FlgI family. The basal body constitutes a major portion of the flagellar organelle and consists of four rings (L,P,S, and M) mounted on a central rod.

Its subcellular location is the periplasm. It is found in the bacterial flagellum basal body. Functionally, assembles around the rod to form the L-ring and probably protects the motor/basal body from shearing forces during rotation. The chain is Flagellar P-ring protein from Oleidesulfovibrio alaskensis (strain ATCC BAA-1058 / DSM 17464 / G20) (Desulfovibrio alaskensis).